A 1154-amino-acid polypeptide reads, in one-letter code: PAN2-PAN3 deadenylation complex catalytic subunit pan2 (1154 aa).

WD repeat units follow at residues 20 to 59 (GLPT…RYTS), 102 to 145 (THDE…DKLR), and 276 to 315 (ATVS…HFNE). The linker stretch occupies residues 316–451 (MSKEVEFADV…GARISGESED (136 aa)). The USP domain maps to 452 to 821 (DPLLKYSNVE…SPCVLAFQVR (370 aa)). One can recognise an Exonuclease domain in the interval 870-1048 (VALDTEFVDL…IEDARMALRL (179 aa)). A divalent metal cation contacts are provided by Asp873, Glu875, Asp982, and Asp1041. The disordered stretch occupies residues 1092-1154 (PGTAVTMQNN…GEFFTGSPLK (63 aa)). 2 stretches are compositionally biased toward polar residues: residues 1096–1109 (VTMQ…TPST) and 1132–1141 (LTPSNGTFSG).

Belongs to the peptidase C19 family. PAN2 subfamily. In terms of assembly, forms a heterotrimer with an asymmetric homodimer of the regulatory subunit pan3 to form the poly(A)-nuclease (PAN) deadenylation complex. Requires a divalent metal cation as cofactor.

The protein localises to the cytoplasm. The enzyme catalyses Exonucleolytic cleavage of poly(A) to 5'-AMP.. Positively regulated by the regulatory subunit pan3. In terms of biological role, catalytic subunit of the poly(A)-nuclease (PAN) deadenylation complex, one of two cytoplasmic mRNA deadenylases involved in mRNA turnover. PAN specifically shortens poly(A) tails of RNA and the activity is stimulated by poly(A)-binding protein pab1. PAN deadenylation is followed by rapid degradation of the shortened mRNA tails by the CCR4-NOT complex. Deadenylated mRNAs are then degraded by two alternative mechanisms, namely exosome-mediated 3'-5' exonucleolytic degradation, or deadenylation-dependent mRNA decaping and subsequent 5'-3' exonucleolytic degradation by xrn1. May also be involved in post-transcriptional maturation of mRNA poly(A) tails. In Emericella nidulans (strain FGSC A4 / ATCC 38163 / CBS 112.46 / NRRL 194 / M139) (Aspergillus nidulans), this protein is PAN2-PAN3 deadenylation complex catalytic subunit pan2.